The primary structure comprises 230 residues: Orotidine 5'-phosphate decarboxylase (230 aa).

Substrate is bound by residues aspartate 10, lysine 32, 59–68 (DLKLHDIPNT), threonine 118, arginine 179, glutamine 188, glycine 208, and arginine 209. Catalysis depends on lysine 61, which acts as the Proton donor.

The protein belongs to the OMP decarboxylase family. Type 1 subfamily. Homodimer.

It carries out the reaction orotidine 5'-phosphate + H(+) = UMP + CO2. The protein operates within pyrimidine metabolism; UMP biosynthesis via de novo pathway; UMP from orotate: step 2/2. Its function is as follows. Catalyzes the decarboxylation of orotidine 5'-monophosphate (OMP) to uridine 5'-monophosphate (UMP). The sequence is that of Orotidine 5'-phosphate decarboxylase from Opitutus terrae (strain DSM 11246 / JCM 15787 / PB90-1).